The chain runs to 284 residues: Bifunctional protein FolD (284 aa).

NADP(+) is bound by residues 166-168 and I232; that span reads GAS.

It belongs to the tetrahydrofolate dehydrogenase/cyclohydrolase family. As to quaternary structure, homodimer.

The enzyme catalyses (6R)-5,10-methylene-5,6,7,8-tetrahydrofolate + NADP(+) = (6R)-5,10-methenyltetrahydrofolate + NADPH. The catalysed reaction is (6R)-5,10-methenyltetrahydrofolate + H2O = (6R)-10-formyltetrahydrofolate + H(+). It participates in one-carbon metabolism; tetrahydrofolate interconversion. Functionally, catalyzes the oxidation of 5,10-methylenetetrahydrofolate to 5,10-methenyltetrahydrofolate and then the hydrolysis of 5,10-methenyltetrahydrofolate to 10-formyltetrahydrofolate. This is Bifunctional protein FolD from Shewanella amazonensis (strain ATCC BAA-1098 / SB2B).